The primary structure comprises 289 residues: Probable porphobilinogen deaminase (289 aa).

Cys-234 carries the S-(dipyrrolylmethanemethyl)cysteine modification.

Belongs to the HMBS family. It depends on dipyrromethane as a cofactor.

It carries out the reaction 4 porphobilinogen + H2O = hydroxymethylbilane + 4 NH4(+). It participates in porphyrin-containing compound metabolism; protoporphyrin-IX biosynthesis; coproporphyrinogen-III from 5-aminolevulinate: step 2/4. Functionally, tetrapolymerization of the monopyrrole PBG into the hydroxymethylbilane pre-uroporphyrinogen in several discrete steps. This chain is Probable porphobilinogen deaminase (hemC), found in Archaeoglobus fulgidus (strain ATCC 49558 / DSM 4304 / JCM 9628 / NBRC 100126 / VC-16).